We begin with the raw amino-acid sequence, 187 residues long: Elongation factor P (187 aa).

Belongs to the elongation factor P family.

Its subcellular location is the cytoplasm. It functions in the pathway protein biosynthesis; polypeptide chain elongation. Functionally, involved in peptide bond synthesis. Stimulates efficient translation and peptide-bond synthesis on native or reconstituted 70S ribosomes in vitro. Probably functions indirectly by altering the affinity of the ribosome for aminoacyl-tRNA, thus increasing their reactivity as acceptors for peptidyl transferase. This chain is Elongation factor P, found in Frankia casuarinae (strain DSM 45818 / CECT 9043 / HFP020203 / CcI3).